Reading from the N-terminus, the 405-residue chain is Phosphopentomutase (405 aa).

The Mn(2+) site is built by D10, D305, H310, D346, H347, and H358.

Belongs to the phosphopentomutase family. Mn(2+) serves as cofactor.

It localises to the cytoplasm. The catalysed reaction is 2-deoxy-alpha-D-ribose 1-phosphate = 2-deoxy-D-ribose 5-phosphate. The enzyme catalyses alpha-D-ribose 1-phosphate = D-ribose 5-phosphate. Its pathway is carbohydrate degradation; 2-deoxy-D-ribose 1-phosphate degradation; D-glyceraldehyde 3-phosphate and acetaldehyde from 2-deoxy-alpha-D-ribose 1-phosphate: step 1/2. Isomerase that catalyzes the conversion of deoxy-ribose 1-phosphate (dRib-1-P) and ribose 1-phosphate (Rib-1-P) to deoxy-ribose 5-phosphate (dRib-5-P) and ribose 5-phosphate (Rib-5-P), respectively. The chain is Phosphopentomutase from Methylorubrum extorquens (strain CM4 / NCIMB 13688) (Methylobacterium extorquens).